Here is a 406-residue protein sequence, read N- to C-terminus: CinA-like protein (406 aa).

This sequence belongs to the CinA family.

This chain is CinA-like protein, found in Pseudothermotoga lettingae (strain ATCC BAA-301 / DSM 14385 / NBRC 107922 / TMO) (Thermotoga lettingae).